The primary structure comprises 206 residues: Large ribosomal subunit protein uL4 (206 aa).

Residues 44-87 (KRQGTQKAKTRSEVRGGGRKPWRQKGTGHARQGSTRSPQWTGGG) are disordered. The segment covering 60–71 (GGRKPWRQKGTG) has biased composition (basic residues).

It belongs to the universal ribosomal protein uL4 family. In terms of assembly, part of the 50S ribosomal subunit.

In terms of biological role, one of the primary rRNA binding proteins, this protein initially binds near the 5'-end of the 23S rRNA. It is important during the early stages of 50S assembly. It makes multiple contacts with different domains of the 23S rRNA in the assembled 50S subunit and ribosome. Its function is as follows. Forms part of the polypeptide exit tunnel. The protein is Large ribosomal subunit protein uL4 of Agathobacter rectalis (strain ATCC 33656 / DSM 3377 / JCM 17463 / KCTC 5835 / VPI 0990) (Eubacterium rectale).